A 715-amino-acid polypeptide reads, in one-letter code: uncharacterized protein (715 aa).

The helical transmembrane segment at 688 to 708 (VWKFNPALYSTITNIFLLIIF) threads the bilayer.

The protein belongs to the plectrovirus ORF1 family.

The protein resides in the host membrane. This is an uncharacterized protein from Spiroplasma virus SpV1-R8A2 B (SpV1).